Here is a 287-residue protein sequence, read N- to C-terminus: ATP synthase gamma chain (287 aa).

It belongs to the ATPase gamma chain family. In terms of assembly, F-type ATPases have 2 components, CF(1) - the catalytic core - and CF(0) - the membrane proton channel. CF(1) has five subunits: alpha(3), beta(3), gamma(1), delta(1), epsilon(1). CF(0) has three main subunits: a, b and c.

The protein localises to the cell inner membrane. Produces ATP from ADP in the presence of a proton gradient across the membrane. The gamma chain is believed to be important in regulating ATPase activity and the flow of protons through the CF(0) complex. The sequence is that of ATP synthase gamma chain from Xanthomonas axonopodis pv. citri (strain 306).